A 309-amino-acid polypeptide reads, in one-letter code: Porphobilinogen deaminase (309 aa).

Cysteine 242 carries the S-(dipyrrolylmethanemethyl)cysteine modification.

The protein belongs to the HMBS family. As to quaternary structure, monomer. Requires dipyrromethane as cofactor.

It catalyses the reaction 4 porphobilinogen + H2O = hydroxymethylbilane + 4 NH4(+). It functions in the pathway porphyrin-containing compound metabolism; protoporphyrin-IX biosynthesis; coproporphyrinogen-III from 5-aminolevulinate: step 2/4. Its function is as follows. Tetrapolymerization of the monopyrrole PBG into the hydroxymethylbilane pre-uroporphyrinogen in several discrete steps. The chain is Porphobilinogen deaminase from Shewanella frigidimarina (strain NCIMB 400).